We begin with the raw amino-acid sequence, 411 residues long: Proline-responsive transcriptional activator PutR (411 aa).

It belongs to the CdaR family.

Its function is as follows. Activates transcription of the putBCP operon. Requires proline as a coactivator. The protein is Proline-responsive transcriptional activator PutR of Bacillus subtilis (strain 168).